The chain runs to 317 residues: Malate dehydrogenase (317 aa).

NAD(+)-binding positions include 13–18 (GAGNIG) and Asp-38. Positions 87 and 93 each coordinate substrate. NAD(+) contacts are provided by residues Asn-100 and 123–125 (VTN). Positions 125 and 156 each coordinate substrate. The Proton acceptor role is filled by His-180.

Belongs to the LDH/MDH superfamily. MDH type 3 family.

It catalyses the reaction (S)-malate + NAD(+) = oxaloacetate + NADH + H(+). In terms of biological role, catalyzes the reversible oxidation of malate to oxaloacetate. In Anaplasma marginale (strain St. Maries), this protein is Malate dehydrogenase.